An 833-amino-acid polypeptide reads, in one-letter code: Leucine--tRNA ligase (833 aa).

Positions 41–52 (PYPSGAGLHVGH) match the 'HIGH' region motif. A 'KMSKS' region motif is present at residues 610 to 614 (KMSKS). Residue Lys613 coordinates ATP.

It belongs to the class-I aminoacyl-tRNA synthetase family.

It localises to the cytoplasm. The catalysed reaction is tRNA(Leu) + L-leucine + ATP = L-leucyl-tRNA(Leu) + AMP + diphosphate. The chain is Leucine--tRNA ligase from Streptococcus pneumoniae (strain 70585).